A 334-amino-acid polypeptide reads, in one-letter code: Holliday junction branch migration complex subunit RuvB (334 aa).

The interval 4–184 (ADRLISAEPI…FGIVQRLEFY (181 aa)) is large ATPase domain (RuvB-L). Residues I23, R24, G65, K68, T69, T70, 131 to 133 (EDY), R174, Y184, and R221 contribute to the ATP site. T69 contributes to the Mg(2+) binding site. The segment at 185-255 (QVADLQHIVS…VAMQALDMLN (71 aa)) is small ATPAse domain (RuvB-S). The tract at residues 258 to 334 (AEGFDYMDRK…YKHFGMVREE (77 aa)) is head domain (RuvB-H). DNA is bound by residues R294, R313, and R318.

This sequence belongs to the RuvB family. In terms of assembly, homohexamer. Forms an RuvA(8)-RuvB(12)-Holliday junction (HJ) complex. HJ DNA is sandwiched between 2 RuvA tetramers; dsDNA enters through RuvA and exits via RuvB. An RuvB hexamer assembles on each DNA strand where it exits the tetramer. Each RuvB hexamer is contacted by two RuvA subunits (via domain III) on 2 adjacent RuvB subunits; this complex drives branch migration. In the full resolvosome a probable DNA-RuvA(4)-RuvB(12)-RuvC(2) complex forms which resolves the HJ.

The protein resides in the cytoplasm. It catalyses the reaction ATP + H2O = ADP + phosphate + H(+). The RuvA-RuvB-RuvC complex processes Holliday junction (HJ) DNA during genetic recombination and DNA repair, while the RuvA-RuvB complex plays an important role in the rescue of blocked DNA replication forks via replication fork reversal (RFR). RuvA specifically binds to HJ cruciform DNA, conferring on it an open structure. The RuvB hexamer acts as an ATP-dependent pump, pulling dsDNA into and through the RuvAB complex. RuvB forms 2 homohexamers on either side of HJ DNA bound by 1 or 2 RuvA tetramers; 4 subunits per hexamer contact DNA at a time. Coordinated motions by a converter formed by DNA-disengaged RuvB subunits stimulates ATP hydrolysis and nucleotide exchange. Immobilization of the converter enables RuvB to convert the ATP-contained energy into a lever motion, pulling 2 nucleotides of DNA out of the RuvA tetramer per ATP hydrolyzed, thus driving DNA branch migration. The RuvB motors rotate together with the DNA substrate, which together with the progressing nucleotide cycle form the mechanistic basis for DNA recombination by continuous HJ branch migration. Branch migration allows RuvC to scan DNA until it finds its consensus sequence, where it cleaves and resolves cruciform DNA. This chain is Holliday junction branch migration complex subunit RuvB, found in Serratia proteamaculans (strain 568).